We begin with the raw amino-acid sequence, 430 residues long: Keratin, type I cytoskeletal 18 (430 aa).

N-acetylserine is present on Ser-2. The segment at 2–79 is head; that stretch reads SFTTRSTFST…GLAGMGGIQN (78 aa). A phosphoserine mark is found at Ser-7, Ser-10, Ser-15, and Ser-18. Ser-30 and Ser-31 each carry phosphoserine; alternate. 2 O-linked (GlcNAc) serine; alternate glycosylation sites follow: Ser-30 and Ser-31. Ser-34 bears the Phosphoserine; by CDK1 mark. Tyr-36 bears the Phosphotyrosine mark. Ser-42 is modified (phosphoserine). At Arg-45 the chain carries Omega-N-methylarginine. Residue Ser-49 is modified to Phosphoserine; alternate. O-linked (GlcNAc) serine; alternate glycosylation is present at Ser-49. The residue at position 51 (Ser-51) is a Phosphoserine; by MAPKAPK2 and MAPKAPK3. Thr-52 bears the Phosphothreonine mark. Ser-53 is modified (phosphoserine; by CAMK, PKC/PRKCE and AURKA). Arg-55 is subject to Omega-N-methylarginine. The residue at position 60 (Ser-60) is a Phosphoserine. Phosphothreonine is present on Thr-65. The interval 70 to 373 is necessary for interaction with PNN; it reads GLAGMGGIQN…EALLNIKVKL (304 aa). Residues 77 to 128 form an interaction with TRADD region; the sequence is IQNEKETMQSLNDRLASYLDRVRSLETENRRLESKIREHLEKKGPQVRDWSH. The coil 1A stretch occupies residues 80-115; sequence EKETMQSLNDRLASYLDRVRSLETENRRLESKIREH. One can recognise an IF rod domain in the interval 80–391; it reads EKETMQSLND…RLLEDGEDFN (312 aa). Residue Lys-81 forms a Glycyl lysine isopeptide (Lys-Gly) (interchain with G-Cter in SUMO2) linkage. 2 positions are modified to phosphoserine: Ser-93 and Ser-100. The linker 1 stretch occupies residues 116–132; it reads LEKKGPQVRDWSHYFKI. Lys-131 carries the post-translational modification N6-acetyllysine. Positions 133 to 224 are coil 1B; the sequence is IEDLRAQIFA…KNHEEEVKGL (92 aa). Ser-177 is modified (phosphoserine). The tract at residues 225–248 is linker 12; that stretch reads QAQIASSGLTVEVDAPKSQDLAKI. An interaction with DNAJB6 region spans residues 243 to 391; it reads QDLAKIMADI…RLLEDGEDFN (149 aa). Lys-247 participates in a covalent cross-link: Glycyl lysine isopeptide (Lys-Gly) (interchain with G-Cter in SUMO2). Positions 249–387 are coil 2; that stretch reads MADIRAQYDE…ATYRRLLEDG (139 aa). At Thr-302 the chain carries Phosphothreonine. Phosphoserine occurs at positions 305, 319, and 323. Residues Lys-370 and Lys-372 each participate in a glycyl lysine isopeptide (Lys-Gly) (interchain with G-Cter in SUMO2) cross-link. A tail region spans residues 388–430; the sequence is EDFNLGDALDSSNSMQTIQKTTTRRIVDGKVVSETNDTKVLRH. 3 positions are modified to phosphoserine: Ser-398, Ser-399, and Ser-401. Thr-404 carries the phosphothreonine modification. Residue Lys-417 forms a Glycyl lysine isopeptide (Lys-Gly) (interchain with G-Cter in SUMO2) linkage. Residue Lys-426 is modified to N6-acetyllysine; alternate. Residue Lys-426 forms a Glycyl lysine isopeptide (Lys-Gly) (interchain with G-Cter in SUMO1); alternate linkage. Lys-426 is covalently cross-linked (Glycyl lysine isopeptide (Lys-Gly) (interchain with G-Cter in SUMO2); alternate).

This sequence belongs to the intermediate filament family. In terms of assembly, heterotetramer of two type I and two type II keratins. KRT18 associates with KRT8. Interacts with PLEC isoform 1C, when in a heterodimer with KRT8. Interacts with the thrombin-antithrombin complex. Interacts with PNN and mutated CFTR. Interacts with YWHAE, YWHAH and YWHAZ only when phosphorylated. Interacts with DNAJB6, TCHP and TRADD. Interacts with FAM83H. Interacts with EPPK1. Interacts with PKP1 and PKP2. (Microbial infection) Interacts with hepatitis C virus/HCV core protein. In terms of processing, phosphorylation at Ser-34 increases during mitosis. Hyperphosphorylated at Ser-53 in diseased cirrhosis liver. Phosphorylation increases by IL-6. Post-translationally, proteolytically cleaved by caspases during epithelial cell apoptosis. Cleavage occurs at Asp-238 by either caspase-3, caspase-6 or caspase-7. O-GlcNAcylation increases solubility, and decreases stability by inducing proteasomal degradation. Expressed in colon, placenta, liver and very weakly in exocervix. Increased expression observed in lymph nodes of breast carcinoma.

Its subcellular location is the nucleus matrix. The protein localises to the cytoplasm. It localises to the perinuclear region. It is found in the nucleus. The protein resides in the nucleolus. Functionally, involved in the uptake of thrombin-antithrombin complexes by hepatic cells. When phosphorylated, plays a role in filament reorganization. Involved in the delivery of mutated CFTR to the plasma membrane. Together with KRT8, is involved in interleukin-6 (IL-6)-mediated barrier protection. This chain is Keratin, type I cytoskeletal 18 (KRT18), found in Homo sapiens (Human).